Here is a 233-residue protein sequence, read N- to C-terminus: Uracil-DNA glycosylase (233 aa).

Aspartate 70 functions as the Proton acceptor in the catalytic mechanism.

Belongs to the uracil-DNA glycosylase (UDG) superfamily. UNG family.

It is found in the cytoplasm. The enzyme catalyses Hydrolyzes single-stranded DNA or mismatched double-stranded DNA and polynucleotides, releasing free uracil.. Its function is as follows. Excises uracil residues from the DNA which can arise as a result of misincorporation of dUMP residues by DNA polymerase or due to deamination of cytosine. This Helicobacter acinonychis (strain Sheeba) protein is Uracil-DNA glycosylase.